The chain runs to 238 residues: uncharacterized protein (238 aa).

To M.thermoautotrophicum MTH564.

This is an uncharacterized protein from Methanocaldococcus jannaschii (strain ATCC 43067 / DSM 2661 / JAL-1 / JCM 10045 / NBRC 100440) (Methanococcus jannaschii).